A 379-amino-acid polypeptide reads, in one-letter code: Cyclin-dependent kinase-like 4 (379 aa).

The 283-residue stretch at 4 to 286 folds into the Protein kinase domain; it reads YEKLAKTGEG…CSQLLESSYF (283 aa). ATP contacts are provided by residues 10–18 and lysine 33; that span reads TGEGSYGVV. The [NKR]KIAxRE motif lies at 45–51; it reads KKIALRE. Aspartate 126 functions as the Proton acceptor in the catalytic mechanism.

It belongs to the protein kinase superfamily. CMGC Ser/Thr protein kinase family. CDC2/CDKX subfamily.

It is found in the cytoplasm. The enzyme catalyses L-seryl-[protein] + ATP = O-phospho-L-seryl-[protein] + ADP + H(+). It carries out the reaction L-threonyl-[protein] + ATP = O-phospho-L-threonyl-[protein] + ADP + H(+). The protein is Cyclin-dependent kinase-like 4 (CDKL4) of Homo sapiens (Human).